The following is a 164-amino-acid chain: UPF0304 protein YE1336 (164 aa).

The protein belongs to the UPF0304 family.

The sequence is that of UPF0304 protein YE1336 from Yersinia enterocolitica serotype O:8 / biotype 1B (strain NCTC 13174 / 8081).